A 409-amino-acid polypeptide reads, in one-letter code: Serine hydroxymethyltransferase (409 aa).

(6S)-5,6,7,8-tetrahydrofolate is bound by residues leucine 116 and 120 to 122 (GHL). Position 225 is an N6-(pyridoxal phosphate)lysine (lysine 225).

Belongs to the SHMT family. In terms of assembly, homodimer. Pyridoxal 5'-phosphate is required as a cofactor.

It is found in the cytoplasm. The catalysed reaction is (6R)-5,10-methylene-5,6,7,8-tetrahydrofolate + glycine + H2O = (6S)-5,6,7,8-tetrahydrofolate + L-serine. Its pathway is one-carbon metabolism; tetrahydrofolate interconversion. It functions in the pathway amino-acid biosynthesis; glycine biosynthesis; glycine from L-serine: step 1/1. Catalyzes the reversible interconversion of serine and glycine with tetrahydrofolate (THF) serving as the one-carbon carrier. This reaction serves as the major source of one-carbon groups required for the biosynthesis of purines, thymidylate, methionine, and other important biomolecules. Also exhibits THF-independent aldolase activity toward beta-hydroxyamino acids, producing glycine and aldehydes, via a retro-aldol mechanism. The protein is Serine hydroxymethyltransferase of Acholeplasma laidlawii (strain PG-8A).